The following is a 364-amino-acid chain: Aminomethyltransferase (364 aa).

The protein belongs to the GcvT family. As to quaternary structure, the glycine cleavage system is composed of four proteins: P, T, L and H.

The enzyme catalyses N(6)-[(R)-S(8)-aminomethyldihydrolipoyl]-L-lysyl-[protein] + (6S)-5,6,7,8-tetrahydrofolate = N(6)-[(R)-dihydrolipoyl]-L-lysyl-[protein] + (6R)-5,10-methylene-5,6,7,8-tetrahydrofolate + NH4(+). The glycine cleavage system catalyzes the degradation of glycine. The protein is Aminomethyltransferase of Desulforamulus reducens (strain ATCC BAA-1160 / DSM 100696 / MI-1) (Desulfotomaculum reducens).